Here is a 344-residue protein sequence, read N- to C-terminus: uncharacterized protein (344 aa).

Over 1–98 (MIDFVKSRDT…NNDEIGIWNY (98 aa)) the chain is Cytoplasmic. The helical transmembrane segment at 99-119 (ISVAEMGGVLLFLSYWIWTCL) threads the bilayer. Histidine 120 is a topological domain (lumenal). A helical membrane pass occupies residues 121–141 (FSKIIFPAQKVICLYIFLFAL). At 142-169 (NQTLQECIEEYVFSSECIKYRQFYSVYE) the chain is on the cytoplasmic side. A helical transmembrane segment spans residues 170–192 (IIDFLRTNFYRLFVIYCALGFGI). Residues 193 to 198 (TRTVPK) are Lumenal-facing. The chain crosses the membrane as a helical span at residues 199–219 (YLMIKGISIVIALCSVYWISL). Topologically, residues 220–222 (YKD) are cytoplasmic. The helical transmembrane segment at 223–243 (VYVVSEIFDMIQYEVFPAIWV) threads the bilayer. Topologically, residues 244–273 (YSICHLLKQCTSVTTYENASKARFFRRMLN) are lumenal. A helical transmembrane segment spans residues 274 to 294 (AFIFIFCASPMLHYLSNIIFG). Topologically, residues 295–344 (NFDYRLSVIIGDLFTFMEKIAFPCYIMFPTHNEALAYNRNVAEEAQEKMI) are cytoplasmic.

It is found in the endoplasmic reticulum membrane. This is an uncharacterized protein from Schizosaccharomyces pombe (strain 972 / ATCC 24843) (Fission yeast).